Here is a 210-residue protein sequence, read N- to C-terminus: MSTFFKGIKKPFLVTLVLLLVCGLAYPLILTGISQVIFPKQANGSLVIVNGKAIGSALIGQDFTDGRFMKGRPSAVNYNTYIREDKDSGNYAGVGSGSKNYAPTNPELVKRVQEDIDAFLKANPSIKKEDIPTDLLTASGSGLDPHISPESAAVQILALVKSTGLSKDKLETIVKNNTQGKAFGVFGEKTVNVLKVNLDIAKELGLFNKK.

Residues 13-33 (LVTLVLLLVCGLAYPLILTGI) traverse the membrane as a helical segment.

It belongs to the KdpC family. In terms of assembly, the system is composed of three essential subunits: KdpA, KdpB and KdpC.

The protein resides in the cell membrane. In terms of biological role, part of the high-affinity ATP-driven potassium transport (or Kdp) system, which catalyzes the hydrolysis of ATP coupled with the electrogenic transport of potassium into the cytoplasm. This subunit acts as a catalytic chaperone that increases the ATP-binding affinity of the ATP-hydrolyzing subunit KdpB by the formation of a transient KdpB/KdpC/ATP ternary complex. The polypeptide is Potassium-transporting ATPase KdpC subunit (Clostridium kluyveri (strain ATCC 8527 / DSM 555 / NBRC 12016 / NCIMB 10680 / K1)).